The following is a 116-amino-acid chain: Large ribosomal subunit protein uL18 (116 aa).

The protein belongs to the universal ribosomal protein uL18 family. As to quaternary structure, part of the 50S ribosomal subunit; part of the 5S rRNA/L5/L18/L25 subcomplex. Contacts the 5S and 23S rRNAs.

Functionally, this is one of the proteins that bind and probably mediate the attachment of the 5S RNA into the large ribosomal subunit, where it forms part of the central protuberance. The chain is Large ribosomal subunit protein uL18 from Chromohalobacter salexigens (strain ATCC BAA-138 / DSM 3043 / CIP 106854 / NCIMB 13768 / 1H11).